The primary structure comprises 67 residues: Large ribosomal subunit protein uL29 (67 aa).

This sequence belongs to the universal ribosomal protein uL29 family.

This chain is Large ribosomal subunit protein uL29 (rpmC), found in Thermus thermophilus.